The primary structure comprises 263 residues: Ribosomal RNA small subunit methyltransferase A (263 aa).

S-adenosyl-L-methionine contacts are provided by I18, G43, E65, D91, and N110.

The protein belongs to the class I-like SAM-binding methyltransferase superfamily. rRNA adenine N(6)-methyltransferase family. RsmA subfamily.

Its subcellular location is the cytoplasm. It catalyses the reaction adenosine(1518)/adenosine(1519) in 16S rRNA + 4 S-adenosyl-L-methionine = N(6)-dimethyladenosine(1518)/N(6)-dimethyladenosine(1519) in 16S rRNA + 4 S-adenosyl-L-homocysteine + 4 H(+). Specifically dimethylates two adjacent adenosines (A1518 and A1519) in the loop of a conserved hairpin near the 3'-end of 16S rRNA in the 30S particle. May play a critical role in biogenesis of 30S subunits. The chain is Ribosomal RNA small subunit methyltransferase A from Ehrlichia chaffeensis (strain ATCC CRL-10679 / Arkansas).